We begin with the raw amino-acid sequence, 315 residues long: L-lactate dehydrogenase (315 aa).

NAD(+)-binding residues include V12, D33, and Y65. Substrate-binding positions include Q82, R88, and 120–123 (NPVD). NAD(+) contacts are provided by residues 118–120 (ISN) and S143. A substrate-binding site is contributed by 148–151 (DTSR). Positions 153 and 168 each coordinate beta-D-fructose 1,6-bisphosphate. H175 acts as the Proton acceptor in catalysis. Y219 is subject to Phosphotyrosine. T228 is a binding site for substrate.

It belongs to the LDH/MDH superfamily. LDH family. In terms of assembly, homotetramer.

It localises to the cytoplasm. The enzyme catalyses (S)-lactate + NAD(+) = pyruvate + NADH + H(+). It functions in the pathway fermentation; pyruvate fermentation to lactate; (S)-lactate from pyruvate: step 1/1. With respect to regulation, allosterically activated by fructose 1,6-bisphosphate (FBP). Its function is as follows. Catalyzes the conversion of lactate to pyruvate. The polypeptide is L-lactate dehydrogenase (Mycoplasmopsis pulmonis (strain UAB CTIP) (Mycoplasma pulmonis)).